The primary structure comprises 361 residues: Phospho-N-acetylmuramoyl-pentapeptide-transferase (361 aa).

The next 10 helical transmembrane spans lie at 28 to 48, 73 to 93, 98 to 118, 132 to 152, 168 to 188, 199 to 219, 235 to 255, 263 to 283, 288 to 308, and 338 to 358; these read LAILTSFFFTFIIAPPCIRWL, TMGGIIITASVLVAVLMWGNL, MWIMIISFLGFGLIGFIDDYL, YKLFAQLLLASSVTLFLYFNP, WLIDLGIFYLPFAIFVIVGSS, GLAAGLVGIASIVNAVLLYIS, GTGELAVFCGAMLGACLGFLW, VFMGDVGSLSLGGALGSLAVI, IVLALVGGIFVVEALSVILQV, and KVIVRFWIIGIILALLSLLTL.

It belongs to the glycosyltransferase 4 family. MraY subfamily. Requires Mg(2+) as cofactor.

The protein resides in the cell inner membrane. It catalyses the reaction UDP-N-acetyl-alpha-D-muramoyl-L-alanyl-gamma-D-glutamyl-meso-2,6-diaminopimeloyl-D-alanyl-D-alanine + di-trans,octa-cis-undecaprenyl phosphate = di-trans,octa-cis-undecaprenyl diphospho-N-acetyl-alpha-D-muramoyl-L-alanyl-D-glutamyl-meso-2,6-diaminopimeloyl-D-alanyl-D-alanine + UMP. It participates in cell wall biogenesis; peptidoglycan biosynthesis. Functionally, catalyzes the initial step of the lipid cycle reactions in the biosynthesis of the cell wall peptidoglycan: transfers peptidoglycan precursor phospho-MurNAc-pentapeptide from UDP-MurNAc-pentapeptide onto the lipid carrier undecaprenyl phosphate, yielding undecaprenyl-pyrophosphoryl-MurNAc-pentapeptide, known as lipid I. The protein is Phospho-N-acetylmuramoyl-pentapeptide-transferase of Thermodesulfovibrio yellowstonii (strain ATCC 51303 / DSM 11347 / YP87).